Consider the following 204-residue polypeptide: Holliday junction branch migration complex subunit RuvA (204 aa).

Residues 1 to 67 (MIDYLYGTLD…GGVISLYGFF (67 aa)) are domain I. The segment at 68–149 (TIEEREMYLL…TVNVLNKEKQ (82 aa)) is domain II. The tract at residues 150-154 (TGAET) is flexible linker. The segment at 155 to 204 (IKNTMVSEAIAGLITLGYKMQQARVAVTNVYEHNENITLEDLIKKSLQYL) is domain III.

It belongs to the RuvA family. Homotetramer. Forms an RuvA(8)-RuvB(12)-Holliday junction (HJ) complex. HJ DNA is sandwiched between 2 RuvA tetramers; dsDNA enters through RuvA and exits via RuvB. An RuvB hexamer assembles on each DNA strand where it exits the tetramer. Each RuvB hexamer is contacted by two RuvA subunits (via domain III) on 2 adjacent RuvB subunits; this complex drives branch migration. In the full resolvosome a probable DNA-RuvA(4)-RuvB(12)-RuvC(2) complex forms which resolves the HJ.

The protein resides in the cytoplasm. Its function is as follows. The RuvA-RuvB-RuvC complex processes Holliday junction (HJ) DNA during genetic recombination and DNA repair, while the RuvA-RuvB complex plays an important role in the rescue of blocked DNA replication forks via replication fork reversal (RFR). RuvA specifically binds to HJ cruciform DNA, conferring on it an open structure. The RuvB hexamer acts as an ATP-dependent pump, pulling dsDNA into and through the RuvAB complex. HJ branch migration allows RuvC to scan DNA until it finds its consensus sequence, where it cleaves and resolves the cruciform DNA. This is Holliday junction branch migration complex subunit RuvA from Endomicrobium trichonymphae.